Here is a 582-residue protein sequence, read N- to C-terminus: Max-binding protein MNT (582 aa).

Residue serine 2 is modified to N-acetylserine. The interval 18–224 (QQQQRAREEQ…RPGGIGTREV (207 aa)) is disordered. The span at 22 to 42 (RAREEQERLRLEQEREQEQKK) shows a compositional bias: basic and acidic residues. Composition is skewed to pro residues over residues 61–82 (EAPP…PLAT) and 99–108 (QPLPPPPPLP). A compositionally biased stretch (low complexity) spans 109–123 (AAAQPLPLAPRQPAL). 2 stretches are compositionally biased toward pro residues: residues 135 to 149 (APLP…PAPL) and 160 to 171 (NGSPKPLQPLPT). A compositionally biased stretch (basic and acidic residues) spans 203 to 214 (PAEEVKSSEQKK). The 52-residue stretch at 220–271 (GTREVHNKLEKNRRAHLKECFETLKRNIPNVDDKKTSNLSVLRTALRYIQSL) folds into the bHLH domain. Residues 271–299 (LKRKEKEYEHEMERLAREKIATQQRLAEL) are leucine-zipper. Positions 319-422 (TGQPEDDQAS…PPPPAAPAQT (104 aa)) are disordered. Acidic residues predominate over residues 334-345 (EGEDNIDEDMEE). Pro residues predominate over residues 368-381 (LPPPSTTPAPLPPH). Low complexity predominate over residues 387 to 408 (HSVALPPAHLPVQQQQPQQKTP). Pro residues predominate over residues 409–418 (LPAPPPPPAA).

In terms of assembly, efficient DNA binding requires dimerization with another bHLH protein. Binds DNA as a homodimer or a heterodimer with MAX.

It localises to the nucleus. Binds DNA as a heterodimer with MAX and represses transcription. Binds to the canonical E box sequence 5'-CACGTG-3' and, with higher affinity, to 5'-CACGCG-3'. In Homo sapiens (Human), this protein is Max-binding protein MNT (MNT).